A 39-amino-acid polypeptide reads, in one-letter code: Photosystem I reaction center subunit IX (39 aa).

A helical transmembrane segment spans residues 7–27 (FLTTAPVAFILFSSFVFALFI).

The protein belongs to the PsaJ family.

Its subcellular location is the cellular thylakoid membrane. Its function is as follows. May help in the organization of the PsaE and PsaF subunits. The chain is Photosystem I reaction center subunit IX from Synechococcus sp. (strain JA-2-3B'a(2-13)) (Cyanobacteria bacterium Yellowstone B-Prime).